Consider the following 637-residue polypeptide: Probable potassium transport system protein Kup 2 (637 aa).

A run of 12 helical transmembrane segments spans residues 18-38 (FLVLLLGSIGVVYGDIGTSPL), 61-81 (LISLMIWTLTIIVTFKYVLFL), 107-127 (MPVLFFAGLIGSALFIGDAMI), 145-165 (PAFSDYVLPLSALIMVGLFAV), 174-194 (AVFFGPITVVWFLAMAWGGLI), 211-231 (ALWFITHAGWAGLIVLGAVFL), 255-275 (WFILVFPALALNYLGQGALVL), 293-313 (ALFPMIILATMATVIASQAVI), 345-365 (IYVPAVNMVLFIGVLVLIFSF), 371-391 (LATAYGISVTGAMVVTTLMAF), 402-422 (AFTAAILLAPLFSIEAVFLAA), and 429-449 (DGGWVPLALAGVIILVMWTWT).

The protein belongs to the HAK/KUP transporter (TC 2.A.72) family.

It localises to the cell inner membrane. It catalyses the reaction K(+)(in) + H(+)(in) = K(+)(out) + H(+)(out). Its function is as follows. Transport of potassium into the cell. Likely operates as a K(+):H(+) symporter. The polypeptide is Probable potassium transport system protein Kup 2 (Agrobacterium fabrum (strain C58 / ATCC 33970) (Agrobacterium tumefaciens (strain C58))).